The following is a 473-amino-acid chain: BPI fold-containing family B member 3 (473 aa).

An N-terminal signal peptide occupies residues 1 to 20 (MMLGVYTLLLLWGLATPCLG). Residue Asn139 is glycosylated (N-linked (GlcNAc...) asparagine). A disulfide bridge links Cys161 with Cys196.

The protein belongs to the BPI/LBP/Plunc superfamily. BPI/LBP family.

It is found in the secreted. May have the capacity to recognize and bind specific classes of odorants. May act as a carrier molecule, transporting odorants across the mucus layer to access receptor sites. May serve as a primary defense mechanism by recognizing and removing potentially harmful odorants or pathogenic microorganisms from the mucosa or clearing excess odorant from mucus to enable new odorant stimuli to be received. In Mus musculus (Mouse), this protein is BPI fold-containing family B member 3.